Consider the following 93-residue polypeptide: DNA-binding protein Fis (93 aa).

Positions 74-93 (QTRAALMMGINRGTLRKKLK) form a DNA-binding region, H-T-H motif.

It belongs to the transcriptional regulatory Fis family. Homodimer.

Its function is as follows. Activates ribosomal RNA transcription. Plays a direct role in upstream activation of rRNA promoters. This is DNA-binding protein Fis from Klebsiella pneumoniae.